A 1063-amino-acid chain; its full sequence is DNA-directed RNA polymerase subunit beta (1063 aa).

This sequence belongs to the RNA polymerase beta chain family. In plastids the minimal PEP RNA polymerase catalytic core is composed of four subunits: alpha, beta, beta', and beta''. When a (nuclear-encoded) sigma factor is associated with the core the holoenzyme is formed, which can initiate transcription.

It localises to the plastid. The protein localises to the chloroplast. It catalyses the reaction RNA(n) + a ribonucleoside 5'-triphosphate = RNA(n+1) + diphosphate. Its function is as follows. DNA-dependent RNA polymerase catalyzes the transcription of DNA into RNA using the four ribonucleoside triphosphates as substrates. In Zygnema circumcarinatum (Green alga), this protein is DNA-directed RNA polymerase subunit beta.